The following is a 72-amino-acid chain: Large ribosomal subunit protein bL31 (72 aa).

4 residues coordinate Zn(2+): cysteine 16, cysteine 18, cysteine 38, and cysteine 41.

This sequence belongs to the bacterial ribosomal protein bL31 family. Type A subfamily. As to quaternary structure, part of the 50S ribosomal subunit. Zn(2+) is required as a cofactor.

Its function is as follows. Binds the 23S rRNA. In Azoarcus sp. (strain BH72), this protein is Large ribosomal subunit protein bL31.